We begin with the raw amino-acid sequence, 289 residues long: Shikimate dehydrogenase (NADP(+)) (289 aa).

Shikimate is bound by residues 20–22 (SIS) and S67. The active-site Proton acceptor is the K71. D83 contributes to the NADP(+) binding site. Residues N92 and D107 each coordinate shikimate. Residues 132-136 (GGGGA) and V230 each bind NADP(+). Y232 is a binding site for shikimate. G253 lines the NADP(+) pocket.

The protein belongs to the shikimate dehydrogenase family. In terms of assembly, homodimer.

It carries out the reaction shikimate + NADP(+) = 3-dehydroshikimate + NADPH + H(+). It functions in the pathway metabolic intermediate biosynthesis; chorismate biosynthesis; chorismate from D-erythrose 4-phosphate and phosphoenolpyruvate: step 4/7. Involved in the biosynthesis of the chorismate, which leads to the biosynthesis of aromatic amino acids. Catalyzes the reversible NADPH linked reduction of 3-dehydroshikimate (DHSA) to yield shikimate (SA). The protein is Shikimate dehydrogenase (NADP(+)) of Streptococcus suis (strain 98HAH33).